A 642-amino-acid chain; its full sequence is MPVITLPDGSQRHYDHAVSPMDVALDIGPGLAKACIAGRVNGELVDACDLIENDTQLSIITAKDEEGLEIIRHSCAHLLGHAIKQLWPHTKMAIGPVIDNGFYYDVDLDRTLTQEDVEALEKRMHELAEKNYDVIKKKVSWHEARETFANRGESYKVSILDENIAHDDKPGLYFHEEYVDMCRGPHVPNMRFCHHFKLMKTAGAYWRGDSNNKMLQRIYGTAWADKKALNAYLQRLEEAAKRDHRKIGKQLDLYHMQEEAPGMVFWHNDGWTIFRELEVFVRSKLKEYQYQEVKGPFMMDRVLWEKTGHWDNYKDAMFTTSSENREYCIKPMNCPGHVQIFNQGLKSYRDLPLRMAEFGSCHRNEPSGSLHGLMRVRGFTQDDAHIFCTEEQIRDEVNGCIRLVYDMYSTFGFEKIVVKLSTRPEKRIGSDEMWDRAEADLAVALEENNIPFEYQLGEGAFYGPKIEFTLYDCLDRAWQCGTVQLDFSLPSRLSASYVGEDNERKVPVMIHRAILGSMERFIGILTEEFAGFFPTWLAPVQVVIMNITDSQSDYVNELTQKLSNAGIRVKADLRNEKIGFKIREHTLRRVPYMLVCGDKEVESGKVAVRTRRGKELGSMDVNEVIEKLQQEIRSRSLKQLEE.

The TGS domain maps to 1–61 (MPVITLPDGS…ENDTQLSIIT (61 aa)). The segment at 243–534 (DHRKIGKQLD…LTEEFAGFFP (292 aa)) is catalytic. The residue at position 286 (Lys286) is an N6-acetyllysine. Positions 334, 385, and 511 each coordinate Zn(2+).

The protein belongs to the class-II aminoacyl-tRNA synthetase family. Homodimer. Zn(2+) serves as cofactor.

The protein localises to the cytoplasm. It catalyses the reaction tRNA(Thr) + L-threonine + ATP = L-threonyl-tRNA(Thr) + AMP + diphosphate + H(+). Functionally, catalyzes the attachment of threonine to tRNA(Thr) in a two-step reaction: L-threonine is first activated by ATP to form Thr-AMP and then transferred to the acceptor end of tRNA(Thr). Also edits incorrectly charged L-seryl-tRNA(Thr). The chain is Threonine--tRNA ligase from Shigella dysenteriae serotype 1 (strain Sd197).